The following is a 250-amino-acid chain: 3-deoxy-manno-octulosonate cytidylyltransferase (250 aa).

It belongs to the KdsB family.

The protein localises to the cytoplasm. It catalyses the reaction 3-deoxy-alpha-D-manno-oct-2-ulosonate + CTP = CMP-3-deoxy-beta-D-manno-octulosonate + diphosphate. Its pathway is nucleotide-sugar biosynthesis; CMP-3-deoxy-D-manno-octulosonate biosynthesis; CMP-3-deoxy-D-manno-octulosonate from 3-deoxy-D-manno-octulosonate and CTP: step 1/1. It functions in the pathway bacterial outer membrane biogenesis; lipopolysaccharide biosynthesis. In terms of biological role, activates KDO (a required 8-carbon sugar) for incorporation into bacterial lipopolysaccharide in Gram-negative bacteria. This Herminiimonas arsenicoxydans protein is 3-deoxy-manno-octulosonate cytidylyltransferase.